Reading from the N-terminus, the 625-residue chain is MRMLLIHSDYIEYEVKDKAIKNPEPISEEEKKGRMDEVLVAFISVEKVDEKNPDEVVEKAINEIIEVAKQVKAENLFVYPFAHLSSELAKPSVAQEVLRRIYEGLKERGYNVGKAPFGYYKAFRISCKGHPLAELSRTIVPEEAKVEEVPEALKKEETELVSYWYILTPEGELVEVDKFDFTGHENLRKFANYEIAKSRIADKEPPHVRLMLEHELVDYEPGSDPGNLRYYPKGRLIKSLLEQYVSEKVIEYGAMEVETPIMYDFEHPALEKYLNRFPARQYIVLSGDKRYFLRFAACFGQFMISKDATISYRNLPLRMYELTRYSFRREKRGELSGLRRLRAFTMPDMHTLAKDIEQAKDEFKKQFKLSMEVLGGVGLTPDDYEVAIRFTEDFWNEHKDFIIELVKLIGKPVLIEMWKQRFFYFILKFEFNFVDNLDKAAALSTVQIDVENAERFGITYYDENGEEKYPLILHCSPSGAIERVMYAILEKQAKLMQEGKKPMFPLWLSPIQVRVIPVSKEYLDYALYVAGKIEGARIRVDVDDEDERLSKKIRRAEKEWIPYIVVVGEKEKETGTITVRRREDGKQYETRIEELIKEIKQKTEGFPYKPRPLPLLLSQRPKFRG.

Residues 1 to 147 are editing domain; it reads MRMLLIHSDY…TIVPEEAKVE (147 aa). Residues 206-505 form a catalytic region; the sequence is PHVRLMLEHE…MQEGKKPMFP (300 aa). Zn(2+) is bound by residues cysteine 298, histidine 350, and histidine 474.

The protein belongs to the class-II aminoacyl-tRNA synthetase family. In terms of assembly, homodimer. Zn(2+) serves as cofactor.

It is found in the cytoplasm. The catalysed reaction is tRNA(Thr) + L-threonine + ATP = L-threonyl-tRNA(Thr) + AMP + diphosphate + H(+). Functionally, catalyzes the attachment of threonine to tRNA(Thr) in a two-step reaction: L-threonine is first activated by ATP to form Thr-AMP and then transferred to the acceptor end of tRNA(Thr). Also edits incorrectly charged L-seryl-tRNA(Thr). This is Threonine--tRNA ligase from Pyrococcus furiosus (strain ATCC 43587 / DSM 3638 / JCM 8422 / Vc1).